The sequence spans 67 residues: Large ribosomal subunit protein uL29c (67 aa).

Belongs to the universal ribosomal protein uL29 family.

Its subcellular location is the plastid. The protein localises to the chloroplast. This Porphyra purpurea (Red seaweed) protein is Large ribosomal subunit protein uL29c (rpl29).